Here is a 217-residue protein sequence, read N- to C-terminus: Transcription antitermination protein NusB (217 aa).

The protein belongs to the NusB family.

Its function is as follows. Involved in transcription antitermination. Required for transcription of ribosomal RNA (rRNA) genes. Binds specifically to the boxA antiterminator sequence of the ribosomal RNA (rrn) operons. The sequence is that of Transcription antitermination protein NusB from Microcystis aeruginosa (strain NIES-843 / IAM M-2473).